The primary structure comprises 414 residues: NAC domain-containing protein 35 (414 aa).

Positions 1 to 21 are enriched in polar residues; sequence MAIVSSTTSIIPMSNQVNNNE. The disordered stretch occupies residues 1 to 47; it reads MAIVSSTTSIIPMSNQVNNNEKGIEDNDHRGGQESHVQNEDEADDHD. Residues 22 to 47 are compositionally biased toward basic and acidic residues; sequence KGIEDNDHRGGQESHVQNEDEADDHD. An NAC domain is found at 51–198; it reads VMPGFRFHPT…EISLCRVYKR (148 aa). Residues 149 to 204 mediate DNA binding; the sequence is IGLKKTLVFYSGKAPKGTRTSWIMNEYRLPHHETEKYQKAEISLCRVYKRPGVEDH. Residues 200 to 251 form a disordered region; sequence GVEDHPSVPRSLSTRHHNHNSSTSSRLALRQQQHHSSSSNHSDNNLNNNNNI. The span at 233–251 shows a compositional bias: low complexity; sequence HHSSSSNHSDNNLNNNNNI.

Expressed in aerial organs in early stages of seedling development.

It is found in the nucleus. Functionally, transcription factor that acts as a floral repressor. Controls flowering time by negatively regulating CONSTANS (CO) expression in a GIGANTEA (GI)-independent manner. Regulates the plant cold response by positive regulation of the cold response genes COR15A and KIN1. May coordinate cold response and flowering time. The chain is NAC domain-containing protein 35 from Arabidopsis thaliana (Mouse-ear cress).